Reading from the N-terminus, the 487-residue chain is Glutamyl-tRNA(Gln) amidotransferase subunit A (487 aa).

Catalysis depends on charge relay system residues K79 and S158. S182 functions as the Acyl-ester intermediate in the catalytic mechanism.

Belongs to the amidase family. GatA subfamily. As to quaternary structure, heterotrimer of A, B and C subunits.

The enzyme catalyses L-glutamyl-tRNA(Gln) + L-glutamine + ATP + H2O = L-glutaminyl-tRNA(Gln) + L-glutamate + ADP + phosphate + H(+). In terms of biological role, allows the formation of correctly charged Gln-tRNA(Gln) through the transamidation of misacylated Glu-tRNA(Gln) in organisms which lack glutaminyl-tRNA synthetase. The reaction takes place in the presence of glutamine and ATP through an activated gamma-phospho-Glu-tRNA(Gln). This Ehrlichia canis (strain Jake) protein is Glutamyl-tRNA(Gln) amidotransferase subunit A.